Here is a 364-residue protein sequence, read N- to C-terminus: Medium-wave-sensitive opsin 1 (364 aa).

The Extracellular segment spans residues 1–52; that stretch reads MAQRWGPHALSGVQAQDAYEDSTQASLFTYTNSNNTRGPFEGPNYHIAPRWV. Residues 17–43 form a required for 11-cis-retinal regeneration region; it reads DAYEDSTQASLFTYTNSNNTRGPFEGP. Asn-34 carries N-linked (GlcNAc...) asparagine glycosylation. A helical transmembrane segment spans residues 53–77; the sequence is YHLTSAWMTIVVIASIFTNGLVLVA. The Cytoplasmic segment spans residues 78-89; the sequence is TMRFKKLRHPLN. Residues 90–115 traverse the membrane as a helical segment; it reads WILVNLAVADLAETVIASTISVVNQV. The Extracellular portion of the chain corresponds to 116–129; the sequence is YGYFVLGHPLCVVE. Cys-126 and Cys-203 form a disulfide bridge. The chain crosses the membrane as a helical span at residues 130–149; sequence GYTVSLCGITGLWSLAIISW. Residues 150 to 168 lie on the Cytoplasmic side of the membrane; that stretch reads ERWLVVCKPFGNVRFDAKL. The helical transmembrane segment at 169–192 threads the bilayer; it reads AIVGIVFSWVWSAVWTAPPIFGWS. Residues 193–218 are Extracellular-facing; it reads RYWPYGLKTSCGPDVFSGTSYPGVQS. A helical membrane pass occupies residues 219–246; it reads YMMVLMVTCCITPLSIIVLCYLHVWLAI. The Cytoplasmic portion of the chain corresponds to 247–268; the sequence is RAVAKQQKESESTQKAEKEVTR. Residues 269-292 traverse the membrane as a helical segment; the sequence is MVVVMVLAYCLCWGPYAFFACFAT. Over 293 to 300 the chain is Extracellular; it reads ANPGYSFH. Residues 301–325 form a helical membrane-spanning segment; it reads PLVAALPAYFAKSATIYNPIIYVFM. The residue at position 312 (Lys-312) is an N6-(retinylidene)lysine. Residues 326-364 are Cytoplasmic-facing; it reads NRQFRNCILQLFGKKVEDSSELSSTSRTEASSVSSVSPA.

This sequence belongs to the G-protein coupled receptor 1 family. Opsin subfamily. In terms of assembly, monomer. Homodimer. Homotetramer. O-glycosylated. Post-translationally, phosphorylated on some or all of the serine and threonine residues present in the C-terminal region. As to expression, expressed in cone photoreceptor cells.

It is found in the membrane. In terms of biological role, visual pigments are the light-absorbing molecules that mediate vision. They consist of an apoprotein, opsin, covalently linked to cis-retinal. May increase spectral sensitivity in dim light. In Cavia porcellus (Guinea pig), this protein is Medium-wave-sensitive opsin 1 (OPN1MW).